The sequence spans 121 residues: Protein AC4 (121 aa).

Positions 11-30 (RGQSSNPHTSESQERNIQTG) are disordered. Positions 12 to 30 (GQSSNPHTSESQERNIQTG) are enriched in polar residues.

This sequence belongs to the geminiviridae protein AC4/C4 family.

Pathogenicity determinant. May act as a suppressor of RNA-mediated gene silencing, also known as post-transcriptional gene silencing (PTGS), a mechanism of plant viral defense that limits the accumulation of viral RNAs. The polypeptide is Protein AC4 (Cabbage leaf curl virus (isolate Jamaica) (CaLCuV)).